The primary structure comprises 142 residues: Galactose-6-phosphate isomerase subunit LacA (142 aa).

Belongs to the LacAB/RpiB family. As to quaternary structure, heteromultimeric protein consisting of LacA and LacB.

It carries out the reaction aldehydo-D-galactose 6-phosphate = keto-D-tagatose 6-phosphate. It participates in carbohydrate metabolism; D-galactose 6-phosphate degradation; D-tagatose 6-phosphate from D-galactose 6-phosphate: step 1/1. This is Galactose-6-phosphate isomerase subunit LacA from Enterococcus faecalis (strain ATCC 700802 / V583).